The primary structure comprises 142 residues: Large ribosomal subunit protein uL13 (142 aa).

The protein belongs to the universal ribosomal protein uL13 family. As to quaternary structure, part of the 50S ribosomal subunit.

Functionally, this protein is one of the early assembly proteins of the 50S ribosomal subunit, although it is not seen to bind rRNA by itself. It is important during the early stages of 50S assembly. This Shewanella baltica (strain OS223) protein is Large ribosomal subunit protein uL13.